The sequence spans 165 residues: Neurotrophin-3 (165 aa).

A signal peptide spans I1–S3. Positions T4–R119 are excised as a propeptide.

It belongs to the NGF-beta family.

The protein localises to the secreted. Functionally, seems to promote the survival of visceral and proprioceptive sensory neurons. The sequence is that of Neurotrophin-3 (NTF3) from Tropidophis haetianus (Haitian dwarf boa).